Here is a 648-residue protein sequence, read N- to C-terminus: Threonine--tRNA ligase (648 aa).

One can recognise a TGS domain in the interval 1-63 (MAQISLTFPD…TQDAAIAIHT (63 aa)). The interval 247–544 (DHRKLGREMN…LIEEHAGKLP (298 aa)) is catalytic. Zn(2+)-binding residues include Cys-344, His-395, and His-521.

It belongs to the class-II aminoacyl-tRNA synthetase family. Homodimer. Zn(2+) serves as cofactor.

The protein resides in the cytoplasm. The catalysed reaction is tRNA(Thr) + L-threonine + ATP = L-threonyl-tRNA(Thr) + AMP + diphosphate + H(+). Functionally, catalyzes the attachment of threonine to tRNA(Thr) in a two-step reaction: L-threonine is first activated by ATP to form Thr-AMP and then transferred to the acceptor end of tRNA(Thr). Also edits incorrectly charged L-seryl-tRNA(Thr). The sequence is that of Threonine--tRNA ligase from Ruegeria sp. (strain TM1040) (Silicibacter sp.).